We begin with the raw amino-acid sequence, 433 residues long: Trigger factor (433 aa).

The PPIase FKBP-type domain maps to 163 to 248 (GDTVNIDFSG…VNEIKFKEVP (86 aa)).

Belongs to the FKBP-type PPIase family. Tig subfamily.

Its subcellular location is the cytoplasm. It catalyses the reaction [protein]-peptidylproline (omega=180) = [protein]-peptidylproline (omega=0). Functionally, involved in protein export. Acts as a chaperone by maintaining the newly synthesized protein in an open conformation. Functions as a peptidyl-prolyl cis-trans isomerase. This chain is Trigger factor, found in Staphylococcus aureus (strain COL).